Here is an 870-residue protein sequence, read N- to C-terminus: Probable inorganic carbon transporter subunit DabA (870 aa).

Zn(2+)-binding residues include C381, D383, H564, and C579.

Belongs to the inorganic carbon transporter (TC 9.A.2) DabA family. As to quaternary structure, forms a complex with DabB. Zn(2+) serves as cofactor.

The protein resides in the cell membrane. Functionally, part of an energy-coupled inorganic carbon pump. The sequence is that of Probable inorganic carbon transporter subunit DabA from Geobacillus kaustophilus (strain HTA426).